Here is a 1021-residue protein sequence, read N- to C-terminus: Putative 115 kDa protein in type-1 retrotransposable element R1DM (1021 aa).

The region spanning 479-741 (RCIRLGYFPA…RSCRYLGITV (263 aa)) is the Reverse transcriptase domain. The segment at 955 to 971 (CACGDPYEDWMHILCAC) is gag-like cysteine motif.

The protein is Putative 115 kDa protein in type-1 retrotransposable element R1DM (R1A1-element\ORF2) of Drosophila melanogaster (Fruit fly).